The sequence spans 233 residues: Phosphoglycolate phosphatase (233 aa).

Catalysis depends on Asp13, which acts as the Nucleophile. 3 residues coordinate Mg(2+): Asp13, Asp15, and Asp175.

The protein belongs to the HAD-like hydrolase superfamily. CbbY/CbbZ/Gph/YieH family. Mg(2+) serves as cofactor.

It catalyses the reaction 2-phosphoglycolate + H2O = glycolate + phosphate. Its pathway is organic acid metabolism; glycolate biosynthesis; glycolate from 2-phosphoglycolate: step 1/1. Specifically catalyzes the dephosphorylation of 2-phosphoglycolate. Is involved in the dissimilation of the intracellular 2-phosphoglycolate formed during the DNA repair of 3'-phosphoglycolate ends, a major class of DNA lesions induced by oxidative stress. In Agrobacterium fabrum (strain C58 / ATCC 33970) (Agrobacterium tumefaciens (strain C58)), this protein is Phosphoglycolate phosphatase.